Reading from the N-terminus, the 497-residue chain is Zinc finger CCCH domain-containing protein 22 (497 aa).

The segment at 136 to 163 (SESMMICKFFMQQRCRFGSSCRSSHGLD) adopts a C3H1-type zinc-finger fold. The interval 236–281 (AQMTDDDGEEEEEEDEQQSASDSEDSVSSDYDEGSPQGIGFLESTN) is disordered. Acidic residues predominate over residues 239–268 (TDDDGEEEEEEDEQQSASDSEDSVSSDYDE). A G-patch domain is found at 300–346 (TRGIASKMMASMGYREGMGLGVSGQGILNPILVKVLPAKRSLDYALE). Positions 352–387 (ECKSEKQKKKRSRGGKRKRGKKFAEAAKAAKQEEES) are disordered. Residues 357–372 (KQKKKRSRGGKRKRGK) are compositionally biased toward basic residues. Residues 373–387 (KFAEAAKAAKQEEES) are compositionally biased toward basic and acidic residues.

The protein is Zinc finger CCCH domain-containing protein 22 of Arabidopsis thaliana (Mouse-ear cress).